The chain runs to 97 residues: Large ribosomal subunit protein bL27 (97 aa).

Residues 1-21 are disordered; it reads MAHKKGVGSSRNGRDSNPKYR.

The protein belongs to the bacterial ribosomal protein bL27 family.

This is Large ribosomal subunit protein bL27 from Gemmatimonas aurantiaca (strain DSM 14586 / JCM 11422 / NBRC 100505 / T-27).